Reading from the N-terminus, the 1875-residue chain is Protein MLP1 (1875 aa).

An N-acetylserine modification is found at Ser-2. 2 coiled-coil regions span residues 69–487 and 531–1678; these read ELKA…IQYL and ERLV…SAES. The residue at position 337 (Thr-337) is a Phosphothreonine. Ser-379 is modified (phosphoserine). Positions 1496–1565 match the Required for nuclear localization motif; the sequence is QPSNINMEEI…EEKVEERIKS (70 aa). The segment at 1641–1689 is disordered; the sequence is KKSFDEGKQQAMMKTTLLERKLAKMESQLSETKQSAESPPKSVNNVQNP. Over residues 1667-1688 the composition is skewed to polar residues; sequence SQLSETKQSAESPPKSVNNVQN. 2 positions are modified to phosphoserine: Ser-1670 and Ser-1710. Low complexity predominate over residues 1716–1725; the sequence is KLNSKSSSGG. Positions 1716 to 1875 are disordered; that stretch reads KLNSKSSSGG…TDKVNDENSI (160 aa). Positions 1728-1737 are enriched in polar residues; sequence PFTSPSPNKH. The residue at position 1733 (Ser-1733) is a Phosphoserine. The span at 1738–1748 shows a compositional bias: basic and acidic residues; sequence LQNDNDKRESL. A compositionally biased stretch (polar residues) spans 1787–1801; that stretch reads TSNNPAQKDSSNRNV. Ser-1803 bears the Phosphoserine mark. 2 stretches are compositionally biased toward basic and acidic residues: residues 1807-1840 and 1865-1875; these read TEKK…GELK and ETDKVNDENSI. Residues 1834-1866 adopt a coiled-coil conformation; sequence DEVGELKNDEDDTTENINESKKIKTEDEEEKET.

In terms of assembly, component of the nuclear pore complex (NPC). NPC constitutes the exclusive means of nucleocytoplasmic transport. NPCs allow the passive diffusion of ions and small molecules and the active, nuclear transport receptor-mediated bidirectional transport of macromolecules such as proteins, RNAs, ribonucleoparticles (RNPs), and ribosomal subunits across the nuclear envelope. Due to its 8-fold rotational symmetry, all subunits are present with 8 copies or multiples thereof. Interacts with NAB2, a hnRNP required for mRNA export. Interacts with MLP2. Post-translationally, may be phosphorylated by CDC28.

The protein localises to the nucleus. It is found in the nuclear pore complex. Its function is as follows. Together with the closely related MLP2, involved in the structural and functional organization of perinuclear chromatin. Together with MLP2, associates with the nuclear pore complex and form filamentous structures along the nuclear periphery. Has a role in the localization of Esc1 to nucleolar regions. Together with MLP2, mediates tethering of the some telomeres to the nuclear periphery, probably mediated by YKU70/YKU80 (HDF1/HDF2) heterodimer and show perinuclear location dependent silencing. MLP1 and MLP2 are involved in telomere length regulation but not silencing or telomere anchoring. Recognizes the 5'-splice site of pre-mRNAs and retains unspliced pre-mRNA in the nucleus without affecting splicing itself. This Saccharomyces cerevisiae (strain ATCC 204508 / S288c) (Baker's yeast) protein is Protein MLP1 (MLP1).